The chain runs to 164 residues: Probable metalloprotease y4qB (164 aa).

The MPN domain occupies 5–142 (IWIPESVVEA…WLPHAWIGQL (138 aa)). Zn(2+) contacts are provided by H89, H91, and D103.

The protein belongs to the peptidase M67B family.

The polypeptide is Probable metalloprotease y4qB (Sinorhizobium fredii (strain NBRC 101917 / NGR234)).